The primary structure comprises 422 residues: Histone deacetylase B (422 aa).

Aspartate 102 contacts substrate. Histidine 144 functions as the Proton acceptor in the catalytic mechanism. Glycine 152 contributes to the substrate binding site. A divalent metal cation is bound by residues aspartate 179, histidine 181, and aspartate 268. Tyrosine 307 is a binding site for substrate. The segment at 399–422 (IDFDRDEDSKENMDKRKKKHNDFS) is disordered. Over residues 413 to 422 (KRKKKHNDFS) the composition is skewed to basic residues.

Belongs to the histone deacetylase family. HD type 1 subfamily.

Its subcellular location is the nucleus. The protein resides in the cytoplasm. The catalysed reaction is N(6)-acetyl-L-lysyl-[histone] + H2O = L-lysyl-[histone] + acetate. Its activity is regulated as follows. Its activity is inhibited by trichostatin A (TSA), a well known histone deacetylase inhibitor. Cytosolic activity is refractory to inhibition by TSA, while the nuclear activity is inhibited completely. Functionally, responsible for the deacetylation of lysine residues on the N-terminal part of the core histones (H2A, H2B, H3 and H4). Histone deacetylation plays an important role in transcriptional regulation, cell cycle progression and developmental events. Histone deacetylases act via the formation of large multiprotein complexes. May play a role in the regulation of the timing of gene expression during the development and in the definition aspects of the phenotype that mediate social behavior in genetically heterogeneous groups. In Dictyostelium discoideum (Social amoeba), this protein is Histone deacetylase B (hdaB).